A 245-amino-acid polypeptide reads, in one-letter code: tRNA1(Val) (adenine(37)-N6)-methyltransferase (245 aa).

The protein belongs to the methyltransferase superfamily. tRNA (adenine-N(6)-)-methyltransferase family.

The protein resides in the cytoplasm. The enzyme catalyses adenosine(37) in tRNA1(Val) + S-adenosyl-L-methionine = N(6)-methyladenosine(37) in tRNA1(Val) + S-adenosyl-L-homocysteine + H(+). Functionally, specifically methylates the adenine in position 37 of tRNA(1)(Val) (anticodon cmo5UAC). The chain is tRNA1(Val) (adenine(37)-N6)-methyltransferase from Citrobacter koseri (strain ATCC BAA-895 / CDC 4225-83 / SGSC4696).